The sequence spans 563 residues: MANAEVSVPVGDVVVVPTEGNEGENPEDTKTQVILQLQPVQQGIYEAGSENNTAVVAVETHTIHKIEEGIDASTIEANEDMEIAYPITCGESKAILLWKKFVCPGINVKCVKFNDQLISPKHFVHLAGKSTLKDWKRAIRLGGIMLRKMMDSGQIDFYQHDKVCSNTCRSTKFDLLISSARAPVPGQQTSVVQTPTSADGSITQIAISEESMEEAGLEWNSALTAAVTMATEEGVKKDSEEISQDTLMFWKGIADVGLMEEVVCNIQKEIEELLRGVQQRLIQAPFQVTDAAVLNNVAHTFGLMDTVKKVLDNRKNQVEQGEEQFLYTLTDLERQLEEQKKQAQDHRLKSQTVQNVVLMPVSTPKPPKRPRLQRPASTTVLSPSPPVHQPQFTVISPITITPVGQSFSMGNIPVATLSQGSSPVTVHTLPSGPQLFRYATVVSSAKSSSPDTVTIHPSSSLALLSSTAMQDGSTLGNMTTMVSPVELVAMESGLTSAIQAVESTSEDGQTIIEIDPAPDPEAEDTEGKAVILETELRTEEKVVAEMEEHQHQVHNVEIVVLED.

The residue at position 2 (Ala-2) is an N-acetylalanine. An SAND domain is found at 72 to 156; sequence ASTIEANEDM…RKMMDSGQID (85 aa). Position 103 (Cys-103) interacts with Zn(2+). Residues Lys-129, Lys-133, Lys-136, and Arg-147 each coordinate DNA. Positions 160, 164, and 168 each coordinate Zn(2+). Residues 304–355 adopt a coiled-coil conformation; sequence MDTVKKVLDNRKNQVEQGEEQFLYTLTDLERQLEEQKKQAQDHRLKSQTVQN. A disordered region spans residues 360–385; sequence PVSTPKPPKRPRLQRPASTTVLSPSP.

As to quaternary structure, homodimer, and heterodimer of GMEB1 and GMEB2. Interacts with TRIM63. Interacts with the glucocorticoid receptor (NR3C1) and NCOA2/TIF2. May interact with HSP27 and CREB-binding protein (CBP).

Its subcellular location is the nucleus. The protein localises to the cytoplasm. Functionally, trans-acting factor that binds to glucocorticoid modulatory elements (GME) present in the TAT (tyrosine aminotransferase) promoter and increases sensitivity to low concentrations of glucocorticoids. Also binds to the transferrin receptor promoter. The polypeptide is Glucocorticoid modulatory element-binding protein 1 (GMEB1) (Bos taurus (Bovine)).